The following is a 77-amino-acid chain: Defensin-like protein 1 (77 aa).

The signal sequence occupies residues 1–30 (MKLSVRFISAALLLFMVFIATGMGPVTVEA). Cystine bridges form between cysteine 33-cysteine 77, cysteine 44-cysteine 64, cysteine 50-cysteine 71, and cysteine 54-cysteine 73.

Belongs to the DEFL family. In terms of tissue distribution, expressed in the whole plant except roots.

It is found in the secreted. Functionally, confers broad-spectrum resistance to pathogens. The sequence is that of Defensin-like protein 1 (PDF2.3) from Arabidopsis thaliana (Mouse-ear cress).